We begin with the raw amino-acid sequence, 1024 residues long: Beta-galactosidase (1024 aa).

Positions 103 and 202 each coordinate substrate. Asp202 lines the Na(+) pocket. Residues Glu417, His419, and Glu462 each contribute to the Mg(2+) site. Residues Glu462 and Glu538 to His541 contribute to the substrate site. Glu462 functions as the Proton donor in the catalytic mechanism. Catalysis depends on Glu538, which acts as the Nucleophile. Asn598 lines the Mg(2+) pocket. Residues Phe602 and Asn605 each contribute to the Na(+) site. 2 residues coordinate substrate: Asn605 and Trp1000.

It belongs to the glycosyl hydrolase 2 family. In terms of assembly, homotetramer. It depends on Mg(2+) as a cofactor. Requires Mn(2+) as cofactor. The cofactor is Na(+).

The enzyme catalyses Hydrolysis of terminal non-reducing beta-D-galactose residues in beta-D-galactosides.. With respect to regulation, inhibited by phenylethyl thio-beta-D-galactoside (PETG), isopropyl thio-beta-D-galactoside (IPTG), L-ribose, D-galactonolactone, lactose and 2-amino-D-galactose. The chain is Beta-galactosidase (lacZ) from Escherichia coli (strain K12).